A 498-amino-acid chain; its full sequence is ATP synthase subunit beta, chloroplastic (498 aa).

172–179 (GGAGVGKT) serves as a coordination point for ATP.

The protein belongs to the ATPase alpha/beta chains family. F-type ATPases have 2 components, CF(1) - the catalytic core - and CF(0) - the membrane proton channel. CF(1) has five subunits: alpha(3), beta(3), gamma(1), delta(1), epsilon(1). CF(0) has four main subunits: a(1), b(1), b'(1) and c(9-12).

The protein resides in the plastid. It is found in the chloroplast thylakoid membrane. The enzyme catalyses ATP + H2O + 4 H(+)(in) = ADP + phosphate + 5 H(+)(out). Its function is as follows. Produces ATP from ADP in the presence of a proton gradient across the membrane. The catalytic sites are hosted primarily by the beta subunits. The sequence is that of ATP synthase subunit beta, chloroplastic from Licuala grandis (Ruffled fan palm).